The following is a 519-amino-acid chain: Probable WRKY transcription factor 33 (519 aa).

2 disordered regions span residues 1–34 (MAASFLTMDNSRTRQNMNGSANWSQQSGRTSTSS) and 123–212 (SSGV…CTFP). Positions 7–34 (TMDNSRTRQNMNGSANWSQQSGRTSTSS) are enriched in polar residues. Over residues 130–142 (TTTTTTTTTTTTT) the composition is skewed to low complexity. A compositionally biased stretch (polar residues) spans 164 to 174 (TETRPNNQAVS). The segment covering 178–188 (REQRKGEDGYN) has biased composition (basic and acidic residues). The segment at residues 178-242 (REQRKGEDGY…YKGSHNHPKP (65 aa)) is a DNA-binding region (WRKY 1). Zn(2+) contacts are provided by cysteine 209, cysteine 214, histidine 237, and histidine 239. Disordered stretches follow at residues 232–255 (VYKGSHNHPKPQSTRRSSSSSSTF) and 267–349 (NRQA…REPR). Positions 245–254 (TRRSSSSSST) are enriched in low complexity. Over residues 269 to 299 (QASSDQPNSNNSFHQSDSFGMQQEDNTTSDS) the composition is skewed to polar residues. The span at 323–332 (PEAKRWKGDN) shows a compositional bias: basic and acidic residues. Positions 356-421 (SDIDILDDGY…YEGKHNHDVP (66 aa)) form a DNA-binding region, WRKY 2. Cysteine 387, cysteine 392, histidine 416, and histidine 418 together coordinate Zn(2+).

Belongs to the WRKY group I family. Interacts with MKS1. Interacts with ATG18A. Interacts with SIB1 and SIB2. Interacts with VQ1 and VQ10. Phosphorylated by MPK4. Phosphorylated on serine residues by MPK3 and MPK6 following infection with the necrotrophic fungal pathogen B.cinerea. As to expression, highly expressed in roots, leaves and flowers, and at lower levels in stems, siliques and seeds.

The protein resides in the nucleus. Its function is as follows. Transcription factor. Interacts specifically with the W box (5'-TTGAC[CT]-3'), a frequently occurring elicitor-responsive cis-acting element. Involved in defense responses. Required for resistance to the necrotrophic fungal pathogen B.cinerea. Regulates the antagonistic relationship between defense pathways mediating responses to the bacterial pathogen P. syringae and the necrotrophic pathogen B.cinerea. Required for the phytoalexin camalexin synthesis following infection with B.cinerea. Acts as a positive regulator of the camalexin biosynthetic genes PAD3 (CYP71B15) and CYP71A13 by binding to their promoters. Acts downstream of MPK3 and MPK6 in reprogramming the expression of camalexin biosynthetic genes, which drives the metabolic flow to camalexin production. Functions with WRKY25 as positive regulator of salt stress response and abscisic acid (ABA) signaling. Functions with WRKY25 and WRKY26 as positive regulator of plant thermotolerance by partially participating in ethylene-response signal transduction pathway. The DNA-binding activity of WRKY33 is increased by SIB1 and SIB2. This is Probable WRKY transcription factor 33 (WRKY33) from Arabidopsis thaliana (Mouse-ear cress).